A 221-amino-acid polypeptide reads, in one-letter code: Probable septum site-determining protein MinC (221 aa).

It belongs to the MinC family. In terms of assembly, interacts with MinD and FtsZ.

Its function is as follows. Cell division inhibitor that blocks the formation of polar Z ring septums. Rapidly oscillates between the poles of the cell to destabilize FtsZ filaments that have formed before they mature into polar Z rings. Prevents FtsZ polymerization. The protein is Probable septum site-determining protein MinC of Shewanella baltica (strain OS223).